The chain runs to 1028 residues: Formate dehydrogenase major subunit (1028 aa).

Positions 1 to 33 (MQVSRRKFFKICAGGMAGTSAAMLGFAPANVLA) form a signal peptide, tat-type signal. The 4Fe-4S Mo/W bis-MGD-type domain maps to 43–114 (AFESRNTCTY…GSLDYVNSES (72 aa)). The [4Fe-4S] cluster site is built by cysteine 50, cysteine 53, cysteine 57, and cysteine 100. Selenocysteine 204 is a non-standard amino acid (selenocysteine).

The protein belongs to the prokaryotic molybdopterin-containing oxidoreductase family. In terms of assembly, formate dehydrogenase is a membrane-bound complex, formed by subunits alpha, beta and gamma. Requires Mo-bis(molybdopterin guanine dinucleotide) as cofactor. It depends on [4Fe-4S] cluster as a cofactor. In terms of processing, predicted to be exported by the Tat system. The position of the signal peptide cleavage has not been experimentally proven.

It localises to the periplasm. The catalysed reaction is formate + NAD(+) = CO2 + NADH. Functionally, allows to use formate as major electron donor during anaerobic respiration. Subunit alpha possibly forms the active site. This chain is Formate dehydrogenase major subunit (fdxG), found in Haemophilus influenzae (strain ATCC 51907 / DSM 11121 / KW20 / Rd).